The sequence spans 387 residues: Cytochrome b (387 aa).

The helical transmembrane segment at 32-52 threads the bilayer; it reads LGSLLGLCLVIQIASGVFLAM. Heme b is bound by residues His82 and His96. A run of 8 helical transmembrane segments spans residues 85–105, 116–136, 151–171, 179–199, 225–245, 289–309, 324–344, and 350–370; these read GASF…YYGS, IGVV…CLVY, LSAI…GFSV, FFAL…MHLM, FIFK…LFVF, LGGV…PYTD, LAFY…QLHV, and QLGQ…VPVI. Heme b contacts are provided by His183 and His197.

This sequence belongs to the cytochrome b family. In terms of assembly, component of the ubiquinol-cytochrome c oxidoreductase (cytochrome b-c1 complex, complex III, CIII), a multisubunit enzyme composed of 10 subunits. The complex is composed of 3 respiratory subunits cytochrome b (COB), cytochrome c1 (CYT1) and Rieske protein (RIP1), 2 core protein subunits COR1 and QCR2, and 5 low-molecular weight protein subunits QCR6, QCR7, QCR8, QCR9 and QCR10. The complex exists as an obligatory dimer and forms supercomplexes (SCs) in the inner mitochondrial membrane with a monomer or a dimer of cytochrome c oxidase (complex IV, CIV), resulting in 2 different assemblies (supercomplexes III(2)IV and III(2)IV(2)). It depends on heme b as a cofactor.

It is found in the mitochondrion inner membrane. Its function is as follows. Component of the ubiquinol-cytochrome c oxidoreductase, a multisubunit transmembrane complex that is part of the mitochondrial electron transport chain which drives oxidative phosphorylation. The complex plays an important role in the uptake of multiple carbon sources present in different host niches. The sequence is that of Cytochrome b from Candida albicans (strain SC5314 / ATCC MYA-2876) (Yeast).